We begin with the raw amino-acid sequence, 263 residues long: Indole-3-glycerol phosphate synthase (263 aa).

The protein belongs to the TrpC family.

The enzyme catalyses 1-(2-carboxyphenylamino)-1-deoxy-D-ribulose 5-phosphate + H(+) = (1S,2R)-1-C-(indol-3-yl)glycerol 3-phosphate + CO2 + H2O. Its pathway is amino-acid biosynthesis; L-tryptophan biosynthesis; L-tryptophan from chorismate: step 4/5. In Sulfurimonas denitrificans (strain ATCC 33889 / DSM 1251) (Thiomicrospira denitrificans (strain ATCC 33889 / DSM 1251)), this protein is Indole-3-glycerol phosphate synthase.